A 62-amino-acid polypeptide reads, in one-letter code: Delta-theraphotoxin-Cg1a 1 (62 aa).

Residues 1–21 (MKTSILFVIFSLALLFALSAA) form the signal peptide. A propeptide spanning residues 22-29 (TEIEETDR) is cleaved from the precursor. Disulfide bonds link cysteine 31/cysteine 46, cysteine 38/cysteine 51, and cysteine 45/cysteine 58.

This sequence belongs to the neurotoxin 10 (Hwtx-1) family. 33 (Jztx-1) subfamily. In terms of tissue distribution, expressed by the venom gland.

The protein resides in the secreted. Its function is as follows. Inhibits voltage-gated sodium channels, preferentially subtype Nav1.5/SCN5A (in cardiac myocytes), but also Nav1.6/SCN8A and Nav1.7/SCN9A (TTX-sensitive Nav in rat DRG neurons) and invertebrate Nav (in insect neurons) as well as voltage-gated potassium channels of the subtype Kv2.1/KCNB1. Is suggested to bind to site 3 of the sodium channels and inhibit the inactivation of the activated channels, thereby blocking neuronal transmission. On potassium channels, inhibits activation of channels with an IC(50) of 8.05 uM through a voltage sensor-trapping mechanism. Increases muscle contraction in several assays (mouse phrenic nerve-diaphragm, toad heart, rat vas deferens) and is suggested to act both presynaptically and postsynaptically. Moderately inhibits voltage-gated sodium channels and weakly inhibits voltage-gated potassium channel. Inhibits the inactivation of rat Nav1.2/SCN2A (IC(50)=870 nM), rat Nav1.3/SCN3A (IC(50)=845 nM), rat Nav1.4/SCN4A (IC(50)=339 nM), human Nav1.5/SCN5A (IC(50)=335 nM) and human Nav1.7/SCN9A sodium channels (IC(50)=348 nM). The toxin delays the inactivation of sodium channels without affecting the activation and steady-state inactivation kinetics in the physiological range of voltages. Site-directed mutagenesis of the sodium channel indicates that the toxin interacts with site 3 located at the extracellular S3-S4 linker of domain IV. On potassium channels, it inhibits activation of channels with an IC(50) of 8.05 uM through a voltage sensor-trapping mechanism. It increases muscle contraction in several assays (mouse phrenic nerve-diaphragm, toad heart, rat vas deferens) and is suggested to act both presynaptically and postsynaptically. This is Delta-theraphotoxin-Cg1a 1 from Chilobrachys guangxiensis (Chinese earth tiger tarantula).